Reading from the N-terminus, the 1056-residue chain is RNA cytidine acetyltransferase (1056 aa).

286-295 (GRGKSAALGI) is an ATP binding site. The span at 433–446 (QNNTSGRESTQTAV) shows a compositional bias: polar residues. Residues 433-463 (QNNTSGRESTQTAVVSRDNKEKDSHLHSQSR) are disordered. The span at 449–463 (RDNKEKDSHLHSQSR) shows a compositional bias: basic and acidic residues. Arg-475 provides a ligand contact to ATP. The N-acetyltransferase domain maps to 566 to 706 (VLLPPIDPKD…VKLRDAKTLP (141 aa)). Acetyl-CoA contacts are provided by residues 638–640 (IAT), 645–651 (ASMGYGS), and Asn-739. A phosphoserine mark is found at Ser-1001, Ser-1007, and Ser-1010.

Belongs to the RNA cytidine acetyltransferase family. NAT10 subfamily. As to quaternary structure, interacts with TAN1. Associates with 90S pre-ribosomal particles.

The protein localises to the nucleus. The protein resides in the nucleolus. It carries out the reaction a cytidine in 18S rRNA + acetyl-CoA + ATP + H2O = an N(4)-acetylcytidine in 18S rRNA + ADP + phosphate + CoA + H(+). The catalysed reaction is a cytidine in tRNA + acetyl-CoA + ATP + H2O = an N(4)-acetylcytidine in tRNA + ADP + phosphate + CoA + H(+). RNA cytidine acetyltransferase with specificity toward both 18S rRNA and tRNAs. Catalyzes the formation of N(4)-acetylcytidine (ac4C) at positions 1280 and 1773 in 18S rRNA. Required for early nucleolar cleavages of precursor rRNA at sites A0, A1 and A2 during 18S rRNA synthesis. Catalyzes the formation of ac4C at position 12 in serine and leucine tRNAs. Requires the tRNA-binding adapter protein TAN1 for full tRNA acetyltransferase activity but not for 18S rRNA acetylation. The sequence is that of RNA cytidine acetyltransferase from Saccharomyces cerevisiae (strain ATCC 204508 / S288c) (Baker's yeast).